Here is a 557-residue protein sequence, read N- to C-terminus: DNA 3'-5' helicase XPB (557 aa).

The segment at methionine 1–proline 135 is required for protein stability or solubility. A Helicase ATP-binding domain is found at valine 190 to arginine 344. Residue leucine 203–threonine 210 coordinates ATP. The short motif at aspartate 298 to histidine 301 is the DEAH box element. Residues arginine 398–isoleucine 544 enclose the Helicase C-terminal domain.

Belongs to the helicase family. RAD25/XPB subfamily. As to quaternary structure, monomer. The cofactor is Mn(2+). Mg(2+) serves as cofactor. It depends on Ca(2+) as a cofactor.

The catalysed reaction is Couples ATP hydrolysis with the unwinding of duplex DNA by translocating in the 3'-5' direction.. It catalyses the reaction ATP + H2O = ADP + phosphate + H(+). ATP-dependent 3'-5' DNA helicase, unwinds 3'-overhangs, 3'- flaps, and splayed-arm DNA substrates but not 5'-overhangs or 5'-flap substrates. Requires ATP hydrolysis for activity; the ATPase activity is DNA-dependent and requires a minimum of 4 single-stranded nucleotides (nt) with 6-10 nt providing all necessary interactions for full processive unwinding. The ATPase prefers ATP over CTP or GTP, is almost inactive with TTP. This chain is DNA 3'-5' helicase XPB, found in Kineococcus radiotolerans (strain ATCC BAA-149 / DSM 14245 / SRS30216).